A 349-amino-acid chain; its full sequence is MAELLAIKWDDNRDKLILLDQTILPNKIEYIEYDTAEGVYDSIKDMIVRGAPAIGVTAAYGLYFAAKVAPEDNFENFFKYLKEKSAYLDSSRPTAVNLSWALKIMESKALENKDKDVKEIKGILREEAKRIHEEDIEICKAIGENLITLLKDGVGILTHCNAGQLATSKYGTATSPMYLAKEKGWNFKVYSDETRPRLQGSTLTALELYEAGIDVTTITDNMAAMVMSQDKIDAVIVGCDRIAANGDTANKIGTMGVSILAKYFGIPMYIAAPTPSIDINTKTGKDIPIEERNSEEVTSRFGVWTAPKGVKVYNPGFDVTPHENITAIVTEKGIVYPPFEENLKKLFEK.

Residues 49–51 (RGA), R92, and Q199 each bind substrate. D240 serves as the catalytic Proton donor. Residue 250 to 251 (NK) participates in substrate binding.

Belongs to the EIF-2B alpha/beta/delta subunits family. DrdI subfamily.

The catalysed reaction is 5-deoxy-alpha-D-ribose 1-phosphate = 5-deoxy-D-ribulose 1-phosphate. It participates in carbohydrate degradation. Catalyzes the isomerization of 5-deoxy-alpha-D-ribose 1-phosphate to 5-deoxy-D-ribulose 1-phosphate, as part of a 5-deoxyribose salvage pathway that recycles this toxic radical SAM enzyme by-product to mainstream metabolites. In Clostridium botulinum (strain 657 / Type Ba4), this protein is 5-deoxyribose 1-phosphate isomerase.